We begin with the raw amino-acid sequence, 331 residues long: Phosphoenolpyruvate transferase (331 aa).

Asp-63 serves as a coordination point for 7,8-didemethyl-8-hydroxy-5-deazariboflavin.

This sequence belongs to the CofD family. Homodimer. It depends on Mg(2+) as a cofactor.

The enzyme catalyses enolpyruvoyl-2-diphospho-5'-guanosine + 7,8-didemethyl-8-hydroxy-5-deazariboflavin = dehydro coenzyme F420-0 + GMP + H(+). Its pathway is cofactor biosynthesis; coenzyme F420 biosynthesis. Its function is as follows. Catalyzes the transfer of the phosphoenolpyruvate moiety from enoylpyruvoyl-2-diphospho-5'-guanosine (EPPG) to 7,8-didemethyl-8-hydroxy-5-deazariboflavin (FO) with the formation of dehydro coenzyme F420-0 and GMP. The polypeptide is Phosphoenolpyruvate transferase (Mycobacterium bovis (strain ATCC BAA-935 / AF2122/97)).